The sequence spans 226 residues: Cytidylate kinase (226 aa).

10–18 (GPASSGKST) lines the ATP pocket.

Belongs to the cytidylate kinase family. Type 1 subfamily.

It localises to the cytoplasm. It catalyses the reaction CMP + ATP = CDP + ADP. The enzyme catalyses dCMP + ATP = dCDP + ADP. This chain is Cytidylate kinase, found in Streptococcus pyogenes serotype M28 (strain MGAS6180).